The chain runs to 360 residues: Geranylgeranyl pyrophosphate synthase 12, chloroplastic (360 aa).

A chloroplast-targeting transit peptide spans 1 to 39 (MANTVHLSSSSLFIQTRGRKYNSILSFNNLQKRTVLSLS). 3 residues coordinate isopentenyl diphosphate: K106, R109, and H138. Mg(2+) is bound by residues D145 and D151. R156 serves as a coordination point for dimethylallyl diphosphate. R157 lines the isopentenyl diphosphate pocket. Dimethylallyl diphosphate is bound by residues K245, T246, Q283, K300, and K310.

This sequence belongs to the FPP/GGPP synthase family. Monomer. It depends on Mg(2+) as a cofactor.

The protein localises to the plastid. The protein resides in the chloroplast. The catalysed reaction is isopentenyl diphosphate + dimethylallyl diphosphate = (2E)-geranyl diphosphate + diphosphate. It carries out the reaction isopentenyl diphosphate + (2E)-geranyl diphosphate = (2E,6E)-farnesyl diphosphate + diphosphate. The enzyme catalyses isopentenyl diphosphate + (2E,6E)-farnesyl diphosphate = (2E,6E,10E)-geranylgeranyl diphosphate + diphosphate. The protein operates within isoprenoid biosynthesis; farnesyl diphosphate biosynthesis; farnesyl diphosphate from geranyl diphosphate and isopentenyl diphosphate: step 1/1. It participates in isoprenoid biosynthesis; geranyl diphosphate biosynthesis; geranyl diphosphate from dimethylallyl diphosphate and isopentenyl diphosphate: step 1/1. Its pathway is isoprenoid biosynthesis; geranylgeranyl diphosphate biosynthesis; geranylgeranyl diphosphate from farnesyl diphosphate and isopentenyl diphosphate: step 1/1. Catalyzes the trans-addition of the three molecules of IPP onto DMAPP to form geranylgeranyl pyrophosphate. The protein is Geranylgeranyl pyrophosphate synthase 12, chloroplastic of Arabidopsis thaliana (Mouse-ear cress).